Reading from the N-terminus, the 66-residue chain is Large ribosomal subunit protein uL29 (66 aa).

The protein belongs to the universal ribosomal protein uL29 family.

The chain is Large ribosomal subunit protein uL29 from Deinococcus deserti (strain DSM 17065 / CIP 109153 / LMG 22923 / VCD115).